The primary structure comprises 159 residues: Phosphopantetheine adenylyltransferase (159 aa).

Serine 9 serves as a coordination point for substrate. ATP-binding positions include 9–10 (SF) and histidine 17. Residues lysine 41, leucine 73, and lysine 87 each contribute to the substrate site. ATP contacts are provided by residues 88 to 90 (GLR), glutamate 98, and 123 to 129 (YSYLSSS).

It belongs to the bacterial CoaD family. As to quaternary structure, homohexamer. Requires Mg(2+) as cofactor.

It localises to the cytoplasm. It carries out the reaction (R)-4'-phosphopantetheine + ATP + H(+) = 3'-dephospho-CoA + diphosphate. The protein operates within cofactor biosynthesis; coenzyme A biosynthesis; CoA from (R)-pantothenate: step 4/5. Reversibly transfers an adenylyl group from ATP to 4'-phosphopantetheine, yielding dephospho-CoA (dPCoA) and pyrophosphate. The sequence is that of Phosphopantetheine adenylyltransferase from Clostridium botulinum (strain Alaska E43 / Type E3).